An 85-amino-acid chain; its full sequence is U4-theraphotoxin-Hhn1c (85 aa).

Residues 1–22 (MKVTLIAIVTCAAVLVLHTTAA) form the signal peptide. The propeptide occupies 23–48 (EELEAESQLMEVGMPDTELAAVDEER). Cystine bridges form between Cys-52–Cys-66, Cys-56–Cys-77, and Cys-71–Cys-82.

It belongs to the neurotoxin 12 (Hwtx-2) family. 02 (Hwtx-2) subfamily. As to expression, expressed by the venom gland.

It is found in the secreted. Postsynaptic neurotoxin. This is U4-theraphotoxin-Hhn1c from Cyriopagopus hainanus (Chinese bird spider).